The primary structure comprises 510 residues: 2,3-bisphosphoglycerate-independent phosphoglycerate mutase (510 aa).

Mn(2+) is bound by residues D12 and S62. The Phosphoserine intermediate role is filled by S62. Substrate is bound by residues H123, 153–154, R185, R191, 260–263, and K335; these read RD and RPDR. D402, H406, D443, H444, and H461 together coordinate Mn(2+).

It belongs to the BPG-independent phosphoglycerate mutase family. Monomer. It depends on Mn(2+) as a cofactor.

It catalyses the reaction (2R)-2-phosphoglycerate = (2R)-3-phosphoglycerate. Its pathway is carbohydrate degradation; glycolysis; pyruvate from D-glyceraldehyde 3-phosphate: step 3/5. Catalyzes the interconversion of 2-phosphoglycerate and 3-phosphoglycerate. This Listeria monocytogenes serotype 4b (strain F2365) protein is 2,3-bisphosphoglycerate-independent phosphoglycerate mutase.